A 566-amino-acid polypeptide reads, in one-letter code: MTMELEEIVYKYALWNAVKHNGQAQVGPVVSKVFAERPELKANAKEVVKLAEKMVAKVNAMSLEQQTAELQKYPELLEERKKEEKKTLSPLPNVKGTVVTRFAPNPDGPLHLGNARAAVLSFEYAKMYKGKFILRFDDTDPKVKKPIKEAYDWIRDDLRWLNITWDLEFKASERMSAYYNVAKVMLEKGFAYVDTLSDAEFKAWRDSRNKTVYKPRTNPPEVNLELWEKMLNGDFDEGKAVVRIKTNPEDPDPSKIDWVMLRIIDTKRNPHPIAGDKFRVWPTYNFATAVDDHEFGITHILRAKEHTTNTEKQRWVYDYMGWEMPTVLEFGRLKLEGFMMSKSKIRGMLETGSERDDPRLPTLAGLRRRGIIPDTVREIIIQVGLKVTDATISFDNIASVNRKLLDPVAKRLMFVREGVLFKLEIPQEMKAKVPLIPARQEFREIFVKPGDEIYLDKGDVEEGKVVRLMDLCNVKIEGDRLRFLSQDLESAKRMGANIIQWVKKSESKSVNVIKADPNKDVEEIRGYGEGYFETLKPGDIVQLVRYGFARVDSISRGEITMIFAHE.

The short motif at P104–N114 is the 'HIGH' region element.

Belongs to the class-I aminoacyl-tRNA synthetase family. Glutamate--tRNA ligase type 2 subfamily.

It localises to the cytoplasm. The enzyme catalyses tRNA(Glu) + L-glutamate + ATP = L-glutamyl-tRNA(Glu) + AMP + diphosphate. Functionally, catalyzes the attachment of glutamate to tRNA(Glu) in a two-step reaction: glutamate is first activated by ATP to form Glu-AMP and then transferred to the acceptor end of tRNA(Glu). The sequence is that of Glutamate--tRNA ligase from Metallosphaera sedula (strain ATCC 51363 / DSM 5348 / JCM 9185 / NBRC 15509 / TH2).